The following is a 144-amino-acid chain: 3-hydroxyacyl-[acyl-carrier-protein] dehydratase FabZ (144 aa).

Residue histidine 48 is part of the active site.

The protein belongs to the thioester dehydratase family. FabZ subfamily.

The protein localises to the cytoplasm. It catalyses the reaction a (3R)-hydroxyacyl-[ACP] = a (2E)-enoyl-[ACP] + H2O. Functionally, involved in unsaturated fatty acids biosynthesis. Catalyzes the dehydration of short chain beta-hydroxyacyl-ACPs and long chain saturated and unsaturated beta-hydroxyacyl-ACPs. The chain is 3-hydroxyacyl-[acyl-carrier-protein] dehydratase FabZ from Bacillus cytotoxicus (strain DSM 22905 / CIP 110041 / 391-98 / NVH 391-98).